A 58-amino-acid polypeptide reads, in one-letter code: Large ribosomal subunit protein bL32 (58 aa).

Residues 1–24 (MAVPKKKTSKSKRDKRKATWKRKA) are disordered.

Belongs to the bacterial ribosomal protein bL32 family.

This is Large ribosomal subunit protein bL32 from Synechococcus sp. (strain ATCC 27144 / PCC 6301 / SAUG 1402/1) (Anacystis nidulans).